A 70-amino-acid chain; its full sequence is Large ribosomal subunit protein bL31 (70 aa).

Residues C16, C18, C38, and C41 each coordinate Zn(2+).

The protein belongs to the bacterial ribosomal protein bL31 family. Type A subfamily. Part of the 50S ribosomal subunit. Zn(2+) is required as a cofactor.

Binds the 23S rRNA. The sequence is that of Large ribosomal subunit protein bL31 from Mycolicibacterium gilvum (strain PYR-GCK) (Mycobacterium gilvum (strain PYR-GCK)).